A 110-amino-acid polypeptide reads, in one-letter code: MLKILNMNEYISLNHYLILSSLVFTIGMFGLFMHRKNIINILMSIELMLLAVNINFVAFSVYMQELSGQIFSIIILTVAAAETAIGLAILLIYFRNKGSIKITDINKMRG.

3 consecutive transmembrane segments (helical) span residues 13 to 33 (LNHY…GLFM), 41 to 61 (ILMS…AFSV), and 73 to 93 (IIIL…LLIY).

The protein belongs to the complex I subunit 4L family. NDH-1 is composed of 14 different subunits. Subunits NuoA, H, J, K, L, M, N constitute the membrane sector of the complex.

The protein resides in the cell inner membrane. The catalysed reaction is a quinone + NADH + 5 H(+)(in) = a quinol + NAD(+) + 4 H(+)(out). Its function is as follows. NDH-1 shuttles electrons from NADH, via FMN and iron-sulfur (Fe-S) centers, to quinones in the respiratory chain. The immediate electron acceptor for the enzyme in this species is believed to be ubiquinone. Couples the redox reaction to proton translocation (for every two electrons transferred, four hydrogen ions are translocated across the cytoplasmic membrane), and thus conserves the redox energy in a proton gradient. The polypeptide is NADH-quinone oxidoreductase subunit K (Rickettsia typhi (strain ATCC VR-144 / Wilmington)).